The chain runs to 559 residues: Vacuolar protein 8 (559 aa).

G2 is lipidated: N-myristoyl glycine. C4 carries the S-palmitoyl cysteine lipid modification. 8 ARM repeats span residues 77–116 (TERDVREVDRDTLEPILFLLQSPDIEVQRAASAALGNLAV), 118–157 (TENKVLIVQLGGLTPLIRQMMSPNVEVQCNAVGCITNLAT), 159–198 (EENKAKIARSGALGPLTRLAKSRDMRVQRNATGALLNMTH), 200–239 (DENRQQLVNAGAIPVLVQLLSSPDVDVQYYCTTALSNIAV), 243–282 (NRRKLAQSEPKLVQSLVNLMDSTSPKVQCQAALALRNLAS), 284–323 (EKYQLDIVRANGLHPLLRLLQSSYLPLILSAVACIRNISI), 325–365 (PMNE…NLAA), and 409–448 (DDLKSHLLNLGVCGVLIPLTHSPSIEVQGNSAAALGNLSS).

The protein belongs to the beta-catenin family.

The protein localises to the vacuole membrane. Its function is as follows. Functions in both vacuole inheritance and protein targeting from the cytoplasm to vacuole. The chain is Vacuolar protein 8 (VAC8) from Gibberella zeae (strain ATCC MYA-4620 / CBS 123657 / FGSC 9075 / NRRL 31084 / PH-1) (Wheat head blight fungus).